Consider the following 143-residue polypeptide: Transcription antitermination protein NusB (143 aa).

The protein belongs to the NusB family.

Functionally, involved in transcription antitermination. Required for transcription of ribosomal RNA (rRNA) genes. Binds specifically to the boxA antiterminator sequence of the ribosomal RNA (rrn) operons. This Anaeromyxobacter sp. (strain Fw109-5) protein is Transcription antitermination protein NusB.